The following is a 254-amino-acid chain: Agamous-like MADS-box protein AGL9 homolog (254 aa).

The MADS-box domain occupies 3–57; that stretch reads RGRVELKRIENKINRQVTFAKRRNGLLKKAYELSVLCDAEVALIIFSNRGKLYEF. In terms of domain architecture, K-box spans 91-181; that stretch reads ELSSQQEYLK…RLRLADGYQM (91 aa).

The protein resides in the nucleus. In terms of biological role, probable transcription factor active in inflorescence development and floral organogenesis. This Sinapis alba (White mustard) protein is Agamous-like MADS-box protein AGL9 homolog (AGL9).